The chain runs to 158 residues: SsrA-binding protein (158 aa).

Belongs to the SmpB family.

It localises to the cytoplasm. Functionally, required for rescue of stalled ribosomes mediated by trans-translation. Binds to transfer-messenger RNA (tmRNA), required for stable association of tmRNA with ribosomes. tmRNA and SmpB together mimic tRNA shape, replacing the anticodon stem-loop with SmpB. tmRNA is encoded by the ssrA gene; the 2 termini fold to resemble tRNA(Ala) and it encodes a 'tag peptide', a short internal open reading frame. During trans-translation Ala-aminoacylated tmRNA acts like a tRNA, entering the A-site of stalled ribosomes, displacing the stalled mRNA. The ribosome then switches to translate the ORF on the tmRNA; the nascent peptide is terminated with the 'tag peptide' encoded by the tmRNA and targeted for degradation. The ribosome is freed to recommence translation, which seems to be the essential function of trans-translation. The protein is SsrA-binding protein of Bartonella quintana (strain Toulouse) (Rochalimaea quintana).